Reading from the N-terminus, the 641-residue chain is Soluble starch synthase 1, chloroplastic/amyloplastic (641 aa).

The transit peptide at 1-113 directs the protein to the chloroplast; it reads MATAAGMGIG…DSIDKTIFVA (113 aa). Residues 62-96 are disordered; it reads TFLVPTSTPPAPTQSPAPAPTPPPLPDSGVGEIEP. Over residues 68 to 87 the composition is skewed to pro residues; it reads STPPAPTQSPAPAPTPPPLP. ADP-alpha-D-glucose is bound at residue K147.

This sequence belongs to the glycosyltransferase 1 family. Bacterial/plant glycogen synthase subfamily. Leaves and immature seeds.

The protein localises to the plastid. It localises to the chloroplast. It is found in the amyloplast. It carries out the reaction [(1-&gt;4)-alpha-D-glucosyl](n) + ADP-alpha-D-glucose = [(1-&gt;4)-alpha-D-glucosyl](n+1) + ADP + H(+). It functions in the pathway glycan biosynthesis; starch biosynthesis. Functionally, involved in starch synthesis in endosperm amyloplasts. Plays a role in the elongation of amylopectin chains. Synthesizes preferentially amylopectin chains with a degree of polymerization (DP) of 7 to 11 by elongating chains with a DP of 4 to 7. Generates distincly chains with a DP of 8 to 12 chains from short chains with a DP of 6 to 7. The polypeptide is Soluble starch synthase 1, chloroplastic/amyloplastic (Oryza sativa subsp. japonica (Rice)).